Reading from the N-terminus, the 240-residue chain is Putative S-adenosylmethionine-dependent methyltransferase RcsF (240 aa).

In terms of domain architecture, TsaA-like spans 5–142 (ISPIGHVRSC…YVPYADIVPD (138 aa)). S-adenosyl-L-methionine is bound by residues 22 to 24 (PRQ), 63 to 64 (HQ), Arg91, and 122 to 125 (LDGT).

It belongs to the tRNA methyltransferase O family.

The chain is Putative S-adenosylmethionine-dependent methyltransferase RcsF (rcsF) from Pseudomonas aeruginosa.